Here is a 213-residue protein sequence, read N- to C-terminus: ABA-inducible protein PHV A1 (213 aa).

Disordered regions lie at residues 1-158 (MASN…KDKT) and 182-213 (NTLG…TRNH). The segment covering 13 to 23 (GETKARTEEKT) has biased composition (basic and acidic residues). LEA 11-mer repeat repeat units follow at residues 27–37 (MGATKQKAGQT), 38–48 (TEATKQKAGET), 49–59 (AEATKQKTGET), 60–70 (AEAAKQKAAEA), 78–88 (AQAAKDKTYET), 89–99 (AQAAKERAAQG), 111–121 (TEAAKQKAAET), 122–132 (TEAAKQKAAEA), and 133–143 (TEAAKQKASDT). The interval 27–143 (MGATKQKAGQ…EAAKQKASDT (117 aa)) is 11 X 11 AA tandem repeats of T-E-A-A-K-Q-K-A-A-E-T. 3 stretches are compositionally biased toward basic and acidic residues: residues 41-74 (TKQK…KDKT), 81-98 (AKDK…RAAQ), and 109-140 (EKTE…KQKA). Over residues 193–213 (ATKDATTGATVKDTTTTTRNH) the composition is skewed to low complexity.

It belongs to the LEA type 4 family.

This chain is ABA-inducible protein PHV A1 (HVA1), found in Hordeum vulgare (Barley).